The following is a 316-amino-acid chain: Probable cell division protein WhiA (316 aa).

The H-T-H motif DNA-binding region spans 275–309 (TLKELGEMVSSGKISKSGINHRLRKLDEIAEQLRS).

It belongs to the WhiA family.

In terms of biological role, involved in cell division and chromosome segregation. This Bacillus licheniformis (strain ATCC 14580 / DSM 13 / JCM 2505 / CCUG 7422 / NBRC 12200 / NCIMB 9375 / NCTC 10341 / NRRL NRS-1264 / Gibson 46) protein is Probable cell division protein WhiA.